A 485-amino-acid chain; its full sequence is UDP-N-acetylmuramate--L-alanine ligase (485 aa).

120–126 is a binding site for ATP; sequence GSHGKTT.

It belongs to the MurCDEF family.

It is found in the cytoplasm. It catalyses the reaction UDP-N-acetyl-alpha-D-muramate + L-alanine + ATP = UDP-N-acetyl-alpha-D-muramoyl-L-alanine + ADP + phosphate + H(+). Its pathway is cell wall biogenesis; peptidoglycan biosynthesis. Its function is as follows. Cell wall formation. In Rickettsia peacockii (strain Rustic), this protein is UDP-N-acetylmuramate--L-alanine ligase.